We begin with the raw amino-acid sequence, 1401 residues long: Bifunctional 3'-5' exonuclease/ATP-dependent helicase WRN (1401 aa).

The segment at 1–271 (METTSLQRKF…FPVTCRNLET (271 aa)) is interaction with WRNIP1. A KBM 1 motif is present at residues 6–18 (LQRKFPEWMSMQS). Residues 51–223 (YEASDCSFLS…GLIIYQKLGN (173 aa)) enclose the 3'-5' exonuclease domain. Zn(2+) contacts are provided by Asp76 and Glu78. Residue Lys148 forms a Glycyl lysine isopeptide (Lys-Gly) (interchain with G-Cter in SUMO2) linkage. Zn(2+) is bound at residue Asp210. Glycyl lysine isopeptide (Lys-Gly) (interchain with G-Cter in SUMO2) cross-links involve residues Lys235 and Lys246. Positions 401-427 (QAKEEKYNDVSHQLSEHLSPNDDENDS) are disordered. Phosphoserine occurs at positions 419, 433, and 444. Residues 464–492 (GTNGRLPPEEEDGHGNEAIKEEQEEEDHL) are disordered. The region spanning 522–688 (HSVLEERRDN…ISCLNLKDPQ (167 aa)) is the Helicase ATP-binding domain. Residue 535–542 (MATGYGKS) coordinates ATP. The short motif at 632–635 (DEAH) is the DEAH box element. The 154-residue stretch at 713 to 866 (DLKPFLVRKA…KLKMMVKMEK (154 aa)) folds into the Helicase C-terminal domain. Residues Cys873, Cys900, Cys901, and Cys904 each contribute to the Zn(2+) site. Residues 952–958 (RGSNSQR) form an interaction with DNA region. A disordered region spans residues 1041 to 1106 (LLPSSNPVSP…PSPGTSSSPL (66 aa)). The segment covering 1043 to 1069 (PSSNPVSPETTQHSSNQNPAGLTTKQS) has biased composition (polar residues). The segment covering 1070–1081 (NLERTHSYKVPE) has biased composition (basic and acidic residues). Ser1098 is modified (phosphoserine). One can recognise an HRDC domain in the interval 1115-1194 (LDARTGLYAR…KHFCQVTSVQ (80 aa)). A compositionally biased stretch (polar residues) spans 1323-1332 (GSDSRTQPPC). The disordered stretch occupies residues 1323–1401 (GSDSRTQPPC…AKTKKKGLFS (79 aa)). Over residues 1348 to 1358 (ESCKESKEAVT) the composition is skewed to basic and acidic residues. Ser1364 is modified (phosphoserine). The KBM 2 motif lies at 1367–1376 (SKRKLPEWFA). The span at 1382–1392 (SADTGSSSSMA) shows a compositional bias: polar residues. Residues 1388–1401 (SSSMAKTKKKGLFS) carry the XLM motif.

It belongs to the helicase family. RecQ subfamily. As to quaternary structure, monomer, and homooligomer. May exist as homodimer, homotrimer, homotetramer and/or homohexamer. Homotetramer, or homohexamer, when bound to DNA. Interacts via its N-terminal domain with WRNIP1. Interacts with EXO1, PCNA and SUPV3L1. Interacts with PML (isoform PML-4). Interacts (via KBM motif) with XRCC5 and XRCC6; promoting recruitment to DNA damage sites. Interacts with RECQL5; this interaction stimulates WRN helicase activity on DNA fork duplexes. The cofactor is Zn(2+). It depends on Mn(2+) as a cofactor. Post-translationally, phosphorylated by PRKDC. In terms of tissue distribution, expressed ubiquitously in most organs at a low level, highly expressed in testis, ovary and spleen.

It is found in the nucleus. The protein resides in the nucleolus. It localises to the nucleoplasm. Its subcellular location is the chromosome. It catalyses the reaction Couples ATP hydrolysis with the unwinding of duplex DNA by translocating in the 3'-5' direction.. The enzyme catalyses ATP + H2O = ADP + phosphate + H(+). Zinc ions stimulate the exonuclease activity. Multifunctional enzyme that has magnesium and ATP-dependent 3'-5' DNA-helicase activity. Has 3'-&gt;5' exonuclease activity on forked dsDNA. Has no nuclease activity towards single-stranded DNA or blunt-ended double-stranded DNA. Binds preferentially to DNA substrates containing alternate secondary structures, such as replication forks and Holliday junctions. May play an important role in the dissociation of joint DNA molecules that can arise as products of homologous recombination, at stalled replication forks or during DNA repair. Alleviates stalling of DNA polymerases at the site of DNA lesions. Unwinds some G-quadruplex DNA. Plays a role in the formation of DNA replication focal centers; stably associates with foci elements generating binding sites for RP-A. Plays a role in double-strand break repair after gamma-irradiation. The protein is Bifunctional 3'-5' exonuclease/ATP-dependent helicase WRN (Wrn) of Mus musculus (Mouse).